The chain runs to 98 residues: NADH-ubiquinone oxidoreductase chain 4L (98 aa).

3 helical membrane-spanning segments follow: residues 1–21 (MSSIYMNILLAFTMALLGLLM), 29–49 (SLLCLEGMMLSLFILSTVTML), and 61–81 (VMLMVFAACEAAVGLALLVTV).

This sequence belongs to the complex I subunit 4L family. Core subunit of respiratory chain NADH dehydrogenase (Complex I) which is composed of 45 different subunits.

Its subcellular location is the mitochondrion inner membrane. The catalysed reaction is a ubiquinone + NADH + 5 H(+)(in) = a ubiquinol + NAD(+) + 4 H(+)(out). Its function is as follows. Core subunit of the mitochondrial membrane respiratory chain NADH dehydrogenase (Complex I) which catalyzes electron transfer from NADH through the respiratory chain, using ubiquinone as an electron acceptor. Part of the enzyme membrane arm which is embedded in the lipid bilayer and involved in proton translocation. This is NADH-ubiquinone oxidoreductase chain 4L (MT-ND4L) from Tamandua tetradactyla (Southern anteater).